The following is a 165-amino-acid chain: Large ribosomal subunit protein uL5 (165 aa).

The protein belongs to the universal ribosomal protein uL5 family. As to quaternary structure, part of the 50S ribosomal subunit; contacts the 5S rRNA and probably tRNA. Forms a bridge to the 30S subunit in the 70S ribosome.

Functionally, this is one of the proteins that bind and probably mediate the attachment of the 5S RNA into the large ribosomal subunit, where it forms part of the central protuberance. In the 70S ribosome it contacts protein S13 of the 30S subunit (bridge B1b), connecting the 2 subunits; this bridge is implicated in subunit movement. May contact the P site tRNA; the 5S rRNA and some of its associated proteins might help stabilize positioning of ribosome-bound tRNAs. This is Large ribosomal subunit protein uL5 from Methanosarcina acetivorans (strain ATCC 35395 / DSM 2834 / JCM 12185 / C2A).